The following is a 150-amino-acid chain: Myeloid-derived growth factor homolog (150 aa).

Residues 1–22 (MTFLKYLLILCTIFLMVTNSLS) form the signal peptide.

This sequence belongs to the MYDGF family.

It is found in the secreted. This is Myeloid-derived growth factor homolog from Dictyostelium discoideum (Social amoeba).